We begin with the raw amino-acid sequence, 354 residues long: N-acetyl-gamma-glutamyl-phosphate reductase (354 aa).

Cys-156 is a catalytic residue.

This sequence belongs to the NAGSA dehydrogenase family. Type 1 subfamily.

Its subcellular location is the cytoplasm. The enzyme catalyses N-acetyl-L-glutamate 5-semialdehyde + phosphate + NADP(+) = N-acetyl-L-glutamyl 5-phosphate + NADPH + H(+). It functions in the pathway amino-acid biosynthesis; L-arginine biosynthesis; N(2)-acetyl-L-ornithine from L-glutamate: step 3/4. Catalyzes the NADPH-dependent reduction of N-acetyl-5-glutamyl phosphate to yield N-acetyl-L-glutamate 5-semialdehyde. This Bordetella bronchiseptica (strain ATCC BAA-588 / NCTC 13252 / RB50) (Alcaligenes bronchisepticus) protein is N-acetyl-gamma-glutamyl-phosphate reductase.